Consider the following 334-residue polypeptide: uncharacterized protein (334 aa).

The protein belongs to the PAPS reductase family.

This is an uncharacterized protein from Escherichia phage 186 (Bacteriophage 186).